The following is a 212-amino-acid chain: Proteasome subunit beta 2 (212 aa).

Residues 1-13 (MSVDEKVARALKG) constitute a propeptide, removed in mature form; by autocatalysis. Thr-14 acts as the Nucleophile in catalysis.

It belongs to the peptidase T1B family. As to quaternary structure, the 20S proteasome core is composed of 14 alpha and 14 beta subunits that assemble into four stacked heptameric rings, resulting in a barrel-shaped structure. The two inner rings, each composed of seven catalytic beta subunits, are sandwiched by two outer rings, each composed of seven alpha subunits. The catalytic chamber with the active sites is on the inside of the barrel. Has a gated structure, the ends of the cylinder being occluded by the N-termini of the alpha-subunits. Is capped at one or both ends by the proteasome regulatory ATPase, PAN.

The protein resides in the cytoplasm. The catalysed reaction is Cleavage of peptide bonds with very broad specificity.. Its activity is regulated as follows. The formation of the proteasomal ATPase PAN-20S proteasome complex, via the docking of the C-termini of PAN into the intersubunit pockets in the alpha-rings, triggers opening of the gate for substrate entry. Interconversion between the open-gate and close-gate conformations leads to a dynamic regulation of the 20S proteasome proteolysis activity. In terms of biological role, component of the proteasome core, a large protease complex with broad specificity involved in protein degradation. This chain is Proteasome subunit beta 2, found in Ignicoccus hospitalis (strain KIN4/I / DSM 18386 / JCM 14125).